The sequence spans 236 residues: Transcription repressor MYB6 (236 aa).

HTH myb-type domains are found at residues 9 to 61 (KAHT…INYL) and 62 to 116 (RPDL…KRKL). DNA-binding regions (H-T-H motif) lie at residues 37-61 (WRSL…INYL) and 89-112 (WSLI…NTHI). Residues 159 to 181 (PKTENSSDNGASTSGTTTDEDLR) are disordered. Residues 162-175 (ENSSDNGASTSGTT) show a composition bias toward polar residues.

Interacts with BHLH012/MYC1 and BHLH042/TT8. Expressed in roots, stems, flower buds, and siliques.

Its subcellular location is the nucleus. This chain is Transcription repressor MYB6 (MYB6), found in Arabidopsis thaliana (Mouse-ear cress).